The sequence spans 150 residues: Putative pre-16S rRNA nuclease (150 aa).

Belongs to the YqgF nuclease family.

It localises to the cytoplasm. Could be a nuclease involved in processing of the 5'-end of pre-16S rRNA. The polypeptide is Putative pre-16S rRNA nuclease (Chlamydia abortus (strain DSM 27085 / S26/3) (Chlamydophila abortus)).